The chain runs to 253 residues: Phosphoribosylaminoimidazole-succinocarboxamide synthase (253 aa).

The protein belongs to the SAICAR synthetase family.

The catalysed reaction is 5-amino-1-(5-phospho-D-ribosyl)imidazole-4-carboxylate + L-aspartate + ATP = (2S)-2-[5-amino-1-(5-phospho-beta-D-ribosyl)imidazole-4-carboxamido]succinate + ADP + phosphate + 2 H(+). It participates in purine metabolism; IMP biosynthesis via de novo pathway; 5-amino-1-(5-phospho-D-ribosyl)imidazole-4-carboxamide from 5-amino-1-(5-phospho-D-ribosyl)imidazole-4-carboxylate: step 1/2. The protein is Phosphoribosylaminoimidazole-succinocarboxamide synthase of Roseobacter denitrificans (strain ATCC 33942 / OCh 114) (Erythrobacter sp. (strain OCh 114)).